Here is a 215-residue protein sequence, read N- to C-terminus: Small ribosomal subunit protein eS1 (215 aa).

The protein belongs to the eukaryotic ribosomal protein eS1 family.

This Thermoplasma volcanium (strain ATCC 51530 / DSM 4299 / JCM 9571 / NBRC 15438 / GSS1) protein is Small ribosomal subunit protein eS1.